Consider the following 119-residue polypeptide: Large ribosomal subunit protein uL18 (119 aa).

This sequence belongs to the universal ribosomal protein uL18 family. Part of the 50S ribosomal subunit; part of the 5S rRNA/L5/L18/L25 subcomplex. Contacts the 5S and 23S rRNAs.

In terms of biological role, this is one of the proteins that bind and probably mediate the attachment of the 5S RNA into the large ribosomal subunit, where it forms part of the central protuberance. This chain is Large ribosomal subunit protein uL18, found in Clostridium beijerinckii (strain ATCC 51743 / NCIMB 8052) (Clostridium acetobutylicum).